Consider the following 559-residue polypeptide: Laccase-7 (559 aa).

Positions 1 to 28 are cleaved as a signal peptide; sequence MVIPWCSSMMRLLWFLFALLLARSVADA. Residues asparagine 32, asparagine 47, and asparagine 82 are each glycosylated (N-linked (GlcNAc...) asparagine). 2 consecutive Plastocyanin-like domains span residues 36–152 and 163–316; these read TVES…PRNG and EVPI…YNTT. Cu cation-binding residues include histidine 86 and histidine 88. 2 N-linked (GlcNAc...) asparagine glycosylation sites follow: asparagine 112 and asparagine 120. Residues histidine 131 and histidine 133 each coordinate Cu cation. N-linked (GlcNAc...) asparagine glycosylation is found at asparagine 151, asparagine 210, asparagine 220, asparagine 257, asparagine 278, asparagine 314, asparagine 363, and asparagine 443. The region spanning 396–543 is the Plastocyanin-like 3 domain; that stretch reads FRLPSQMSLL…GMVFAVDNGT (148 aa). Cu cation-binding residues include histidine 461, histidine 464, and histidine 466. Asparagine 484 is a glycosylation site (N-linked (GlcNAc...) asparagine). Residues histidine 522, cysteine 523, histidine 524, and histidine 528 each contribute to the Cu cation site. Asparagine 541 carries an N-linked (GlcNAc...) asparagine glycan.

The protein belongs to the multicopper oxidase family. The cofactor is Cu cation.

It is found in the secreted. The protein resides in the extracellular space. Its subcellular location is the apoplast. The catalysed reaction is 4 hydroquinone + O2 = 4 benzosemiquinone + 2 H2O. Functionally, lignin degradation and detoxification of lignin-derived products. The sequence is that of Laccase-7 (LAC7) from Oryza sativa subsp. japonica (Rice).